A 187-amino-acid polypeptide reads, in one-letter code: Elongation factor P (187 aa).

Belongs to the elongation factor P family.

It is found in the cytoplasm. It functions in the pathway protein biosynthesis; polypeptide chain elongation. In terms of biological role, involved in peptide bond synthesis. Stimulates efficient translation and peptide-bond synthesis on native or reconstituted 70S ribosomes in vitro. Probably functions indirectly by altering the affinity of the ribosome for aminoacyl-tRNA, thus increasing their reactivity as acceptors for peptidyl transferase. This chain is Elongation factor P, found in Azobacteroides pseudotrichonymphae genomovar. CFP2.